A 190-amino-acid chain; its full sequence is Cell division protein SepF (190 aa).

It belongs to the SepF family. In terms of assembly, homodimer. Interacts with FtsZ.

It localises to the cytoplasm. In terms of biological role, cell division protein that is part of the divisome complex and is recruited early to the Z-ring. Probably stimulates Z-ring formation, perhaps through the cross-linking of FtsZ protofilaments. Its function overlaps with FtsA. In Synechococcus sp. (strain WH7803), this protein is Cell division protein SepF.